The sequence spans 474 residues: tRNA modification GTPase MnmE (474 aa).

Arg-35, Glu-92, and Lys-135 together coordinate (6S)-5-formyl-5,6,7,8-tetrahydrofolate. A TrmE-type G domain is found at 231 to 396 (GLHVVLAGQP…LRAALLEIAG (166 aa)). A K(+)-binding site is contributed by Asn-241. GTP-binding positions include 241–246 (NVGKSS), 260–266 (TPIAGTT), 285–288 (DTAG), and 377–379 (SAR). Ser-245 is a Mg(2+) binding site. The K(+) site is built by Thr-260, Ile-262, and Thr-265. Thr-266 is a Mg(2+) binding site. Lys-474 is a binding site for (6S)-5-formyl-5,6,7,8-tetrahydrofolate.

Belongs to the TRAFAC class TrmE-Era-EngA-EngB-Septin-like GTPase superfamily. TrmE GTPase family. As to quaternary structure, homodimer. Heterotetramer of two MnmE and two MnmG subunits. Requires K(+) as cofactor.

Its subcellular location is the cytoplasm. Exhibits a very high intrinsic GTPase hydrolysis rate. Involved in the addition of a carboxymethylaminomethyl (cmnm) group at the wobble position (U34) of certain tRNAs, forming tRNA-cmnm(5)s(2)U34. This is tRNA modification GTPase MnmE from Ralstonia nicotianae (strain ATCC BAA-1114 / GMI1000) (Ralstonia solanacearum).